Consider the following 228-residue polypeptide: Probable septum site-determining protein MinC (228 aa).

It belongs to the MinC family. In terms of assembly, interacts with MinD and FtsZ.

Functionally, cell division inhibitor that blocks the formation of polar Z ring septums. Rapidly oscillates between the poles of the cell to destabilize FtsZ filaments that have formed before they mature into polar Z rings. Prevents FtsZ polymerization. This Pectobacterium carotovorum subsp. carotovorum (strain PC1) protein is Probable septum site-determining protein MinC.